Reading from the N-terminus, the 540-residue chain is Chaperonin GroEL (540 aa).

ATP contacts are provided by residues 29 to 32 (TIGP), 86 to 90 (DGTTT), glycine 413, 476 to 478 (NAA), and aspartate 492. Residues 520-540 (DKPEPESNNQMPATPGMGGMM) are disordered.

The protein belongs to the chaperonin (HSP60) family. As to quaternary structure, forms a cylinder of 14 subunits composed of two heptameric rings stacked back-to-back. Interacts with the co-chaperonin GroES.

It is found in the cytoplasm. The enzyme catalyses ATP + H2O + a folded polypeptide = ADP + phosphate + an unfolded polypeptide.. Functionally, together with its co-chaperonin GroES, plays an essential role in assisting protein folding. The GroEL-GroES system forms a nano-cage that allows encapsulation of the non-native substrate proteins and provides a physical environment optimized to promote and accelerate protein folding. The polypeptide is Chaperonin GroEL (Ligilactobacillus salivarius (strain UCC118) (Lactobacillus salivarius)).